A 29-amino-acid polypeptide reads, in one-letter code: Cycloviolacin-O16 (29 aa).

Residues 1-29 constitute a cross-link (cyclopeptide (Gly-Asn)); the sequence is GLPCGETCFTGKCYTPGCSCSYPICKKIN. Cystine bridges form between Cys4-Cys18, Cys8-Cys20, and Cys13-Cys25.

Post-translationally, this is a cyclic peptide.

Functionally, probably participates in a plant defense mechanism. The chain is Cycloviolacin-O16 from Viola odorata (Sweet violet).